The primary structure comprises 119 residues: Large ribosomal subunit protein uL18 (119 aa).

It belongs to the universal ribosomal protein uL18 family. In terms of assembly, part of the 50S ribosomal subunit; part of the 5S rRNA/L5/L18/L25 subcomplex. Contacts the 5S and 23S rRNAs.

In terms of biological role, this is one of the proteins that bind and probably mediate the attachment of the 5S RNA into the large ribosomal subunit, where it forms part of the central protuberance. The chain is Large ribosomal subunit protein uL18 from Jannaschia sp. (strain CCS1).